We begin with the raw amino-acid sequence, 433 residues long: 4-hydroxy-3-methylbut-2-en-1-yl diphosphate synthase (flavodoxin) (433 aa).

A compositionally biased stretch (polar residues) spans 1–13 (MNKPETVTENSLA). Residues 1–23 (MNKPETVTENSLASDVAGPAPRH) form a disordered region. C314, C317, C360, and E367 together coordinate [4Fe-4S] cluster.

This sequence belongs to the IspG family. Requires [4Fe-4S] cluster as cofactor.

The catalysed reaction is (2E)-4-hydroxy-3-methylbut-2-enyl diphosphate + oxidized [flavodoxin] + H2O + 2 H(+) = 2-C-methyl-D-erythritol 2,4-cyclic diphosphate + reduced [flavodoxin]. Its pathway is isoprenoid biosynthesis; isopentenyl diphosphate biosynthesis via DXP pathway; isopentenyl diphosphate from 1-deoxy-D-xylulose 5-phosphate: step 5/6. Its function is as follows. Converts 2C-methyl-D-erythritol 2,4-cyclodiphosphate (ME-2,4cPP) into 1-hydroxy-2-methyl-2-(E)-butenyl 4-diphosphate. This is 4-hydroxy-3-methylbut-2-en-1-yl diphosphate synthase (flavodoxin) from Bradyrhizobium sp. (strain ORS 278).